Here is a 209-residue protein sequence, read N- to C-terminus: Ion-translocating oxidoreductase complex subunit G (209 aa).

The helical transmembrane segment at 9–29 threads the bilayer; it reads GLVLAIFACASTGLVAVTHYL. An FMN phosphoryl threonine modification is found at T175.

The protein belongs to the RnfG family. In terms of assembly, the complex is composed of six subunits: RnfA, RnfB, RnfC, RnfD, RnfE and RnfG. The cofactor is FMN.

The protein resides in the cell inner membrane. Its function is as follows. Part of a membrane-bound complex that couples electron transfer with translocation of ions across the membrane. The chain is Ion-translocating oxidoreductase complex subunit G from Vibrio atlanticus (strain LGP32) (Vibrio splendidus (strain Mel32)).